Consider the following 158-residue polypeptide: Class 10 plant pathogenesis-related protein 2B (158 aa).

A trans-zeatin-binding site is contributed by aspartate 8. 3 residues coordinate Ca(2+): proline 32, valine 35, and isoleucine 38. Glutamate 60, histidine 69, tyrosine 81, and tyrosine 83 together coordinate trans-zeatin. Residue tyrosine 83 coordinates melatonin.

The protein belongs to the BetVI family.

It is found in the cytoplasm. It localises to the cytosol. Class II ribonuclease (RNase). Binds to several cytokinins including natural adenine-type (e.g. trans-zeatin and kinetin) and artificial urea-type (e.g. N,N'-diphenylurea and N-phenyl-N'-(2-chloro-4-pyridyl)urea) hormones. Interacts with melatonin. This is Class 10 plant pathogenesis-related protein 2B from Lupinus luteus (European yellow lupine).